The primary structure comprises 435 residues: Cell adhesion molecule 2 (435 aa).

The signal sequence occupies residues 1-24 (MIWKRSAVLRFYSVCGLLLQGSQG). Residues 25 to 367 (QFPLTQNVTV…SLAGQNGPDH (343 aa)) are Extracellular-facing. The Ig-like V-type domain maps to 27-119 (PLTQNVTVVE…PVKTSKAYLT (93 aa)). N-linked (GlcNAc...) asparagine glycans are attached at residues asparagine 31 and asparagine 51. Intrachain disulfides connect cysteine 44-cysteine 104, cysteine 146-cysteine 203, and cysteine 248-cysteine 296. Ig-like C2-type domains are found at residues 127-219 (PQIS…VAMQ) and 227-312 (PSVK…YVLI). N-linked (GlcNAc...) asparagine glycosylation occurs at asparagine 291. Residues 337–351 (SVTITTSPSTSASSS) are compositionally biased toward low complexity. The interval 337 to 360 (SVTITTSPSTSASSSSRRDPNSLA) is disordered. The helical transmembrane segment at 368-388 (ALIGGIVAVVVFVTLCSIFLL) threads the bilayer. Residues 389 to 435 (GRYLARHKGTYLTNEAKGAEDAPDADTAIINAEGSQVNAEEKKEYFI) are Cytoplasmic-facing. Position 423 is a phosphoserine (serine 423).

This sequence belongs to the nectin family. Post-translationally, glycosylation at Asn-51 reduces adhesive binding.

Its subcellular location is the cell membrane. It is found in the synapse. The protein localises to the cell projection. It localises to the axon. In terms of biological role, adhesion molecule that engages in homo- and heterophilic interactions with the other nectin-like family members, leading to cell aggregation. Important for synapse organization, providing regulated trans-synaptic adhesion. Preferentially binds to oligodendrocytes. This is Cell adhesion molecule 2 (Cadm2) from Mus musculus (Mouse).